The following is a 322-amino-acid chain: Ribonucleoside-diphosphate reductase subunit beta nrdF1 (322 aa).

3 residues coordinate Fe cation: D70, E101, and H104. The active site involves Y108. 3 residues coordinate Fe cation: E161, E195, and H198.

It belongs to the ribonucleoside diphosphate reductase small chain family. In terms of assembly, tetramer of two alpha and two beta subunits. Requires Fe cation as cofactor.

It catalyses the reaction a 2'-deoxyribonucleoside 5'-diphosphate + [thioredoxin]-disulfide + H2O = a ribonucleoside 5'-diphosphate + [thioredoxin]-dithiol. In terms of biological role, provides the precursors necessary for DNA synthesis. Catalyzes the biosynthesis of deoxyribonucleotides from the corresponding ribonucleotides. In Mycobacterium tuberculosis (strain CDC 1551 / Oshkosh), this protein is Ribonucleoside-diphosphate reductase subunit beta nrdF1 (nrdF1).